Here is a 358-residue protein sequence, read N- to C-terminus: Chorismate synthase (358 aa).

NADP(+) is bound at residue R48. Residues 125-127 (RAS), S277, 292-296 (KPIPS), and R318 each bind FMN.

The protein belongs to the chorismate synthase family. As to quaternary structure, homotetramer. It depends on FMNH2 as a cofactor.

The enzyme catalyses 5-O-(1-carboxyvinyl)-3-phosphoshikimate = chorismate + phosphate. Its pathway is metabolic intermediate biosynthesis; chorismate biosynthesis; chorismate from D-erythrose 4-phosphate and phosphoenolpyruvate: step 7/7. Functionally, catalyzes the anti-1,4-elimination of the C-3 phosphate and the C-6 proR hydrogen from 5-enolpyruvylshikimate-3-phosphate (EPSP) to yield chorismate, which is the branch point compound that serves as the starting substrate for the three terminal pathways of aromatic amino acid biosynthesis. This reaction introduces a second double bond into the aromatic ring system. This is Chorismate synthase from Desulfatibacillum aliphaticivorans.